The sequence spans 220 residues: Ribonuclease HII (220 aa).

One can recognise an RNase H type-2 domain in the interval 32–220 (KHIAGIDEAG…FAPIKGRFDC (189 aa)). A divalent metal cation-binding residues include Asp38, Glu39, and Asp130.

The protein belongs to the RNase HII family. It depends on Mn(2+) as a cofactor. Mg(2+) is required as a cofactor.

The protein localises to the cytoplasm. It carries out the reaction Endonucleolytic cleavage to 5'-phosphomonoester.. Functionally, endonuclease that specifically degrades the RNA of RNA-DNA hybrids. The sequence is that of Ribonuclease HII from Brucella suis (strain ATCC 23445 / NCTC 10510).